The primary structure comprises 187 residues: Ribosome-recycling factor (187 aa).

The protein belongs to the RRF family.

It localises to the cytoplasm. Its function is as follows. Responsible for the release of ribosomes from messenger RNA at the termination of protein biosynthesis. May increase the efficiency of translation by recycling ribosomes from one round of translation to another. The protein is Ribosome-recycling factor of Petrotoga mobilis (strain DSM 10674 / SJ95).